The sequence spans 375 residues: Alanine racemase (375 aa).

The Proton acceptor; specific for D-alanine role is filled by Lys40. Position 40 is an N6-(pyridoxal phosphate)lysine (Lys40). Arg140 is a substrate binding site. The active-site Proton acceptor; specific for L-alanine is the Tyr268. Met315 contributes to the substrate binding site.

It belongs to the alanine racemase family. Pyridoxal 5'-phosphate is required as a cofactor.

It carries out the reaction L-alanine = D-alanine. Its pathway is amino-acid biosynthesis; D-alanine biosynthesis; D-alanine from L-alanine: step 1/1. Its function is as follows. Catalyzes the interconversion of L-alanine and D-alanine. May also act on other amino acids. This Limosilactobacillus reuteri (strain DSM 20016) (Lactobacillus reuteri) protein is Alanine racemase (alr).